The sequence spans 1935 residues: Myosin-7 (1935 aa).

The Myosin N-terminal SH3-like domain maps to 32–81 (DLKKDVYVPDDKEEFVKAKILSREGGKVTAETEHGKTVTVKEDQVLQQNP). Positions 85 to 778 (DKIEDMAMLT…LLGLLEEMRD (694 aa)) constitute a Myosin motor domain. The residue at position 129 (Lys129) is an N6,N6,N6-trimethyllysine. 178–185 (GESGAGKT) contributes to the ATP binding site. Thr378 is modified (phosphothreonine). Actin-binding regions lie at residues 655–677 (LNKL…IPNE) and 757–771 (KFGH…GLLG). The IQ domain maps to 781 to 810 (LSRIITRIQAQSRGVLSRMEFKKLLERRDS). The stretch at 839–1935 (LLKSAETEKE…DIGTKGLNEE (1097 aa)) forms a coiled coil. Residues Ser1137 and Ser1269 each carry the phosphoserine modification. At Thr1282 the chain carries Phosphothreonine. Tyr1308 is modified (phosphotyrosine). Thr1309 carries the phosphothreonine modification. Ser1510 is subject to Phosphoserine. Thr1513 is modified (phosphothreonine). Residues 1907 to 1935 (EERADIAESQVNKLRAKSRDIGTKGLNEE) are disordered. Over residues 1923–1935 (KSRDIGTKGLNEE) the composition is skewed to basic and acidic residues.

It belongs to the TRAFAC class myosin-kinesin ATPase superfamily. Myosin family. As to quaternary structure, muscle myosin is a hexameric protein that consists of 2 heavy chain subunits (MHC), 2 alkali light chain subunits (MLC) and 2 regulatory light chain subunits (MLC-2). Interacts with ECPAS. Interacts (via C-terminus) with LRRC39.

Its subcellular location is the cytoplasm. The protein localises to the myofibril. The protein resides in the sarcomere. Myosins are actin-based motor molecules with ATPase activity essential for muscle contraction. Forms regular bipolar thick filaments that, together with actin thin filaments, constitute the fundamental contractile unit of skeletal and cardiac muscle. The sequence is that of Myosin-7 (MYH7) from Sus scrofa (Pig).